The chain runs to 800 residues: Phosphoinositide 3-kinase adapter protein 1 (800 aa).

The region spanning 8–145 (GGYDVLILYA…AVKKAISEDS (138 aa)) is the TIR domain. The necessary and sufficient to mediate inhibition of NF-kappa-B downstream of activated TLRs stretch occupies residues 10–144 (YDVLILYASD…EAVKKAISED (135 aa)). One can recognise a DBB domain in the interval 185-321 (VQPDHIRCGV…NIPASGLHLF (137 aa)). The residue at position 266 (tyrosine 266) is a Phosphotyrosine. A phosphotyrosine; by SYK mark is found at tyrosine 423, tyrosine 448, and tyrosine 463. The segment at 527–548 (EMASRPPVPVPRPESSSPQPDN) is disordered. Positions 643–663 (QQENLKRLRDSITRRQMEKQK) form a coiled coil. Over residues 702–713 (PKKELKRGDWKT) the composition is skewed to basic and acidic residues. The interval 702–800 (PKKELKRGDW…YPPPVPPRGR (99 aa)) is disordered. A compositionally biased stretch (low complexity) spans 714 to 737 (ESTSSTTSSASNRSSTRSILSVSS). Polar residues predominate over residues 749-759 (SEASRSRSPIP). Pro residues-rich tracts occupy residues 767-777 (LPLPERPPRVP) and 791-800 (YPPPVPPRGR).

Homooligomer. Interacts (phosphorylated on tyrosine residues within YXXM motifs) with PIK3R1 (via SH2 domain); required for BCR- and TLR-mediated activation of phosphoinositide 3-kinase. In terms of processing, constitutively phosphorylated. Phosphorylated on tyrosine residues within the YXXM motifs by BTK and SYK. Isoform 1 and isoform 2 are phosphorylated on tyrosine residues, most likely within the YXXM motifs, via CD19 activation.

It is found in the cytoplasm. The protein localises to the cell membrane. Signaling adapter that contributes to B-cell development by linking B-cell receptor (BCR) signaling to the phosphoinositide 3-kinase (PI3K)-Akt signaling pathway. Has a complementary role to the BCR coreceptor CD19, coupling BCR and PI3K activation by providing a docking site for the PI3K subunit PIK3R1. Alternatively, links Toll-like receptor (TLR) signaling to PI3K activation, a process preventing excessive inflammatory cytokine production. Also involved in the activation of PI3K in natural killer cells. May be involved in the survival of mature B-cells via activation of REL. The sequence is that of Phosphoinositide 3-kinase adapter protein 1 (PIK3AP1) from Gallus gallus (Chicken).